The chain runs to 511 residues: 2,3-bisphosphoglycerate-independent phosphoglycerate mutase (511 aa).

A Mn(2+)-binding site is contributed by Asp-12. At Tyr-36 the chain carries Phosphotyrosine. Residue Ser-62 participates in Mn(2+) binding. Ser-62 (phosphoserine intermediate) is an active-site residue. Residues His-123, 153–154, Arg-185, Arg-191, 261–264, and Lys-336 contribute to the substrate site; these read RD and RPDR. 5 residues coordinate Mn(2+): Asp-403, His-407, Asp-444, His-445, and His-462.

The protein belongs to the BPG-independent phosphoglycerate mutase family. Monomer. It depends on Mn(2+) as a cofactor.

The enzyme catalyses (2R)-2-phosphoglycerate = (2R)-3-phosphoglycerate. The protein operates within carbohydrate degradation; glycolysis; pyruvate from D-glyceraldehyde 3-phosphate: step 3/5. Its function is as follows. Essential for rapid growth and for sporulation. Catalyzes the interconversion of 2-phosphoglycerate and 3-phosphoglycerate. This chain is 2,3-bisphosphoglycerate-independent phosphoglycerate mutase, found in Bacillus pumilus (strain SAFR-032).